The following is a 557-amino-acid chain: Dihydroxy-acid dehydratase (557 aa).

A Mg(2+)-binding site is contributed by Asp-78. Cys-119 contributes to the [2Fe-2S] cluster binding site. Mg(2+) is bound by residues Asp-120 and Lys-121. At Lys-121 the chain carries N6-carboxylysine. Cys-192 serves as a coordination point for [2Fe-2S] cluster. Residue Glu-442 coordinates Mg(2+). Residue Ser-468 is the Proton acceptor of the active site.

Belongs to the IlvD/Edd family. Homodimer. [2Fe-2S] cluster serves as cofactor. Requires Mg(2+) as cofactor.

The catalysed reaction is (2R)-2,3-dihydroxy-3-methylbutanoate = 3-methyl-2-oxobutanoate + H2O. The enzyme catalyses (2R,3R)-2,3-dihydroxy-3-methylpentanoate = (S)-3-methyl-2-oxopentanoate + H2O. Its pathway is amino-acid biosynthesis; L-isoleucine biosynthesis; L-isoleucine from 2-oxobutanoate: step 3/4. The protein operates within amino-acid biosynthesis; L-valine biosynthesis; L-valine from pyruvate: step 3/4. Its function is as follows. Functions in the biosynthesis of branched-chain amino acids. Catalyzes the dehydration of (2R,3R)-2,3-dihydroxy-3-methylpentanoate (2,3-dihydroxy-3-methylvalerate) into 2-oxo-3-methylpentanoate (2-oxo-3-methylvalerate) and of (2R)-2,3-dihydroxy-3-methylbutanoate (2,3-dihydroxyisovalerate) into 2-oxo-3-methylbutanoate (2-oxoisovalerate), the penultimate precursor to L-isoleucine and L-valine, respectively. The polypeptide is Dihydroxy-acid dehydratase (Bacillus cereus (strain 03BB102)).